A 462-amino-acid chain; its full sequence is tRNA modification GTPase MnmE (462 aa).

(6S)-5-formyl-5,6,7,8-tetrahydrofolate-binding residues include arginine 23, glutamate 88, and arginine 127. Residues glycine 224 to phenylalanine 383 enclose the TrmE-type G domain. Residue asparagine 234 coordinates K(+). GTP contacts are provided by residues asparagine 234 to serine 239, threonine 253 to threonine 259, and aspartate 278 to glycine 281. A Mg(2+)-binding site is contributed by serine 238. The K(+) site is built by threonine 253, isoleucine 255, and threonine 258. Threonine 259 is a binding site for Mg(2+). Lysine 462 contributes to the (6S)-5-formyl-5,6,7,8-tetrahydrofolate binding site.

It belongs to the TRAFAC class TrmE-Era-EngA-EngB-Septin-like GTPase superfamily. TrmE GTPase family. Homodimer. Heterotetramer of two MnmE and two MnmG subunits. K(+) serves as cofactor.

Its subcellular location is the cytoplasm. Its function is as follows. Exhibits a very high intrinsic GTPase hydrolysis rate. Involved in the addition of a carboxymethylaminomethyl (cmnm) group at the wobble position (U34) of certain tRNAs, forming tRNA-cmnm(5)s(2)U34. In Geobacillus kaustophilus (strain HTA426), this protein is tRNA modification GTPase MnmE.